A 152-amino-acid chain; its full sequence is Deoxyuridine 5'-triphosphate nucleotidohydrolase (152 aa).

Substrate is bound by residues 71–73 (RSG), N84, 88–90 (LID), and M98.

It belongs to the dUTPase family. The cofactor is Mg(2+).

It carries out the reaction dUTP + H2O = dUMP + diphosphate + H(+). It participates in pyrimidine metabolism; dUMP biosynthesis; dUMP from dCTP (dUTP route): step 2/2. Its function is as follows. This enzyme is involved in nucleotide metabolism: it produces dUMP, the immediate precursor of thymidine nucleotides and it decreases the intracellular concentration of dUTP so that uracil cannot be incorporated into DNA. The sequence is that of Deoxyuridine 5'-triphosphate nucleotidohydrolase from Shewanella sediminis (strain HAW-EB3).